We begin with the raw amino-acid sequence, 861 residues long: Leucine--tRNA ligase (861 aa).

The short motif at 43–53 is the 'HIGH' region element; sequence PYPSGKLHMGH. Residues 588 to 592 carry the 'KMSKS' region motif; it reads KMSKS. Lys591 is an ATP binding site.

Belongs to the class-I aminoacyl-tRNA synthetase family.

The protein localises to the cytoplasm. It carries out the reaction tRNA(Leu) + L-leucine + ATP = L-leucyl-tRNA(Leu) + AMP + diphosphate. This is Leucine--tRNA ligase from Symbiobacterium thermophilum (strain DSM 24528 / JCM 14929 / IAM 14863 / T).